A 280-amino-acid polypeptide reads, in one-letter code: Myb family transcription factor PHL11 (280 aa).

The HTH myb-type domain maps to 20–80 (RDPKPRLRWT…HLQKYRLGQQ (61 aa)). Positions 51–76 (PKSVLKLMGLKGLTLYHLKSHLQKYR) form a DNA-binding region, H-T-H motif. The tract at residues 77-98 (LGQQQGKKQNRTEQNKENAGSS) is disordered. Residues 129–149 (AEAMRHQVDAQQRFQEQLEVQ) are coiled coil. An LHEQLE motif is present at residues 142–147 (FQEQLE).

The protein belongs to the MYB-CC family.

The protein localises to the nucleus. The chain is Myb family transcription factor PHL11 from Arabidopsis thaliana (Mouse-ear cress).